We begin with the raw amino-acid sequence, 578 residues long: MSNAILQYSLYLIILVLLAIPLGKYIGKVMNEEKVFLSKLILPCENFIYKVLGINEEDMDWKKYSFSVLAFSAVGFIFLFALNLLQGVLPLNPEGISGSSWDLSFNTTASFITNTNWQAYSGESQLSYLTQMLGLTVQNFLSAGVGIAVLFALIRGFTRVNKSGLGNFWRDLTRIVLYLLVPLSIVLSILLVSQGTVQNFKPYEEVALLEEIVLDDGNRVTSQIVPQGPAASQVAIKQLGTNGGGFFGVNSAHPLENPTAFSNLLEMLSILLIPAALCFTFGRNIKDKRQGRAIFIAMFTLLIIALCIIGVSEANGTPQLAQNGDVNLGYIDQSGGNMEGKESRFGVVGSSTWAAFTTAASNGSVNSMHDSFTPIGGMVTMLLMQLGEVVFGGVGCGLYGMIAFAIITVFIAGLMVGRTPEYLGKKIEPYEMKMAMLICLATPISILIGSALASINPEILNSLTNSGAHGFSEILYAYSSAGGNNGSAFAGLGANTVFINVSIGLIMLFVRFVPMIATLAIAGSLVKKKKVATSVGTLPTHNLLFIGLLIFVVLLVGALSFFPALALGPIAEFLQMIA.

Transmembrane regions (helical) follow at residues 3 to 23 (NAILQYSLYLIILVLLAIPLG), 65 to 85 (SFSVLAFSAVGFIFLFALNLL), 134 to 154 (GLTVQNFLSAGVGIAVLFALI), 175 to 195 (IVLYLLVPLSIVLSILLVSQG), 261 to 281 (FSNLLEMLSILLIPAALCFTF), 293 to 313 (AIFIAMFTLLIIALCIIGVSE), 397 to 417 (GLYGMIAFAIITVFIAGLMVG), 435 to 455 (AMLICLATPISILIGSALASI), 503 to 523 (IGLIMLFVRFVPMIATLAIAG), and 543 to 563 (LLFIGLLIFVVLLVGALSFFP).

Belongs to the KdpA family. As to quaternary structure, the system is composed of three essential subunits: KdpA, KdpB and KdpC.

The protein localises to the cell membrane. Part of the high-affinity ATP-driven potassium transport (or Kdp) system, which catalyzes the hydrolysis of ATP coupled with the electrogenic transport of potassium into the cytoplasm. This subunit binds the extracellular potassium ions and delivers the ions to the membrane domain of KdpB through an intramembrane tunnel. This chain is Potassium-transporting ATPase potassium-binding subunit, found in Clostridium perfringens (strain ATCC 13124 / DSM 756 / JCM 1290 / NCIMB 6125 / NCTC 8237 / Type A).